The following is a 1199-amino-acid chain: MLRNKRKAGKLVRAPQKAARIDSQANAHAEDHSDLEHSAPSTDDGFDEPKPTIAKKVSLSTAIPKKNKFKQRDDTKNVKPPTLEEMKELRDTQNLFHSNLFKLQVKEMLEELQLKQKYTDFIENWLESFTVFTRQLKDGLMERSHLEIPLKLSQKPTGFVFSKPTREPYLIGAAATGTLLGPKIVVDVALEMPKESLHKEDYLNLRYDQKRALYLTYVTERMKESPAYAQDQFNFNYYANNPLKPVLELTPGTKQVNKHLQVRLFITAPLSSFKPGRFVPWNNNIRPSYYGDEWDEKEPLPSTQHYNANVLFDLTLSENQTHLDKAFKGRRNFQDGLLLLKVWLRQRQLDIGYSGFGAHILSAFIVYLNTQRILHHSSSSYQVARTVWNQLANTDWTKGISLSLVPIQTEELNKFAEQYDVCFIDFTGQHNLCANIPLYLYQRVREEAKLAVELLNDMKLNSFPLIFMQKCPLYSRVDNILKISNYSCINQMLTLHSQPRFKYDFAKYGYPQLLQLLTELLKKGLAERVHSILPLETATPAWPVENKAPVIGNYIQLGLILQPEHAYEVLNKGPAANDDPEGAEEFRRFWGEKSNLRRFQDGSITEAVVWGSAQDSPAKKRLIVRQIVLHLLEHQLQLDSKDVQYIAGELDQVYKLSPWFKVNKLKTKLSLDQDTDAEALSPHAIRSYDELARQLHGLNDLPLEIVSISGVSPVFRYCEPQPVLPQARLVENRILTSSIQRVVIQLGQSGKWPNELSALRALKTAFLIEIGEKLEAQCHLHWMMSADGLLVLKQGYCFLIELAHNKELALLKQEVTERGITTYIDNAASRSLERQHYILPKVSGALHSLHQTYSAFGSTVLLAKRWLATQLLDDGLWPDMATELLVAHLFQQRYAPQPIEAPQTGFIRFLQLLAFSDFNGELFLLNFNNSWQEQQVADLEHNYRSNRQSYPPLAVATSYDMQHAGRLWTSEESPSQRVLGHVTRLARHALEIIETSLLSKDLRFVRPAQLFRASNEGYDLVIQFKPDLVPNSLSYDLGSPFVSFSQPNFNLTRAGSGDVARIVGLLRSAYSDFAAFFYNPHGGKELAIVWRPPTEFAAKPFKVTELQACSPCGNGRVQVIKETLVEDFKLLLKDFYLRIATPEELKREQREHQKPKRYFDAKQTEEKSTPKPKVRKANEKEAPPKKKRLIKSSALKALK.

The span at 1–10 (MLRNKRKAGK) shows a compositional bias: basic residues. 2 disordered regions span residues 1–51 (MLRN…EPKP) and 1146–1199 (KREQ…KALK). Composition is skewed to basic and acidic residues over residues 28 to 37 (HAEDHSDLEH) and 1146 to 1169 (KREQ…EKST).

This sequence belongs to the NRAP family. In terms of assembly, part of the small subunit (SSU) processome, composed of more than 70 proteins and the RNA chaperone small nucleolar RNA (snoRNA) U3.

The protein resides in the nucleus. It is found in the nucleolus. It localises to the chromosome. Part of the small subunit (SSU) processome, first precursor of the small eukaryotic ribosomal subunit. During the assembly of the SSU processome in the nucleolus, many ribosome biogenesis factors, an RNA chaperone and ribosomal proteins associate with the nascent pre-rRNA and work in concert to generate RNA folding, modifications, rearrangements and cleavage as well as targeted degradation of pre-ribosomal RNA by the RNA exosome. This is Nucleolar protein 6 from Drosophila yakuba (Fruit fly).